Here is a 124-residue protein sequence, read N- to C-terminus: Ragulator complex protein LAMTOR2 homolog (124 aa).

Belongs to the GAMAD family. Part of the Ragulator complex.

Functionally, regulator of the TOR pathway, a signaling cascade that promotes cell growth in response to growth factors, energy levels, and amino acids. May activate the TOR signaling cascade in response to amino acids. The protein is Ragulator complex protein LAMTOR2 homolog of Caenorhabditis elegans.